The sequence spans 198 residues: Cytochrome c oxidase assembly protein CtaG (198 aa).

Topologically, residues 1 to 12 are cytoplasmic; sequence MADNGQADRKER. Residues 13–35 form a helical; Signal-anchor for type II membrane protein membrane-spanning segment; the sequence is SNGVIVGTCLAFVAGMIGMAYAA. The Periplasmic portion of the chain corresponds to 36 to 198; the sequence is VPLYDMFCRV…QVKAKAENKL (163 aa).

It belongs to the COX11/CtaG family.

The protein resides in the cell inner membrane. Its function is as follows. Exerts its effect at some terminal stage of cytochrome c oxidase synthesis, probably by being involved in the insertion of the copper B into subunit I. This Rhizobium meliloti (strain 1021) (Ensifer meliloti) protein is Cytochrome c oxidase assembly protein CtaG.